The chain runs to 241 residues: Agamous-like MADS-box protein AP1 (241 aa).

An MADS-box domain is found at 1-61 (MGRGRVQLKR…GKLFEYSTDS (61 aa)). One can recognise a K-box domain in the interval 88–178 (QGNWSLEYSK…AKEIKEKEKT (91 aa)).

As to expression, expressed in tendrils and flowers.

Its subcellular location is the nucleus. Functionally, probable transcription factor involved in flower development. This is Agamous-like MADS-box protein AP1 from Vitis vinifera (Grape).